A 50-amino-acid chain; its full sequence is Cytochrome c oxidase subunit 4 (50 aa).

Residues 2-17 are Cytoplasmic-facing; it reads ASHHEITDHKHGEMDI. A helical transmembrane segment spans residues 18 to 49; sequence RHQQATFAGFIKGATWVSILSIAVLVFLALAN. A topological domain (periplasmic) is located at residue Ser50.

Its subcellular location is the cell inner membrane. The enzyme catalyses 4 Fe(II)-[cytochrome c] + O2 + 8 H(+)(in) = 4 Fe(III)-[cytochrome c] + 2 H2O + 4 H(+)(out). Functionally, not required for enzymatic activity or proton pumping of the cytochrome c oxidase complex. This Paracoccus denitrificans protein is Cytochrome c oxidase subunit 4 (ctaH).